The sequence spans 229 residues: Cytochrome c oxidase subunit 2 (229 aa).

At 1–26 (MSTWANLGLQDSASPLMEQLIFFHDH) the chain is on the mitochondrial intermembrane side. Residues 27–48 (ALLILVMITVLVGYLMFMLFFN) form a helical membrane-spanning segment. Residues 49 to 62 (SYVNRFLLHGQLIE) lie on the Mitochondrial matrix side of the membrane. The chain crosses the membrane as a helical span at residues 63–82 (MIWTILPAIILLFIAMPSLR). Topologically, residues 83–229 (LLYLLDEINE…IKWISSTVNS (147 aa)) are mitochondrial intermembrane. Cu cation is bound by residues H161, C196, E198, C200, H204, and M207. A Mg(2+)-binding site is contributed by E198.

It belongs to the cytochrome c oxidase subunit 2 family. Component of the cytochrome c oxidase (complex IV, CIV), a multisubunit enzyme composed of a catalytic core of 3 subunits and several supernumerary subunits. The complex exists as a monomer or a dimer and forms supercomplexes (SCs) in the inner mitochondrial membrane with ubiquinol-cytochrome c oxidoreductase (cytochrome b-c1 complex, complex III, CIII). Requires Cu cation as cofactor.

Its subcellular location is the mitochondrion inner membrane. It carries out the reaction 4 Fe(II)-[cytochrome c] + O2 + 8 H(+)(in) = 4 Fe(III)-[cytochrome c] + 2 H2O + 4 H(+)(out). Functionally, component of the cytochrome c oxidase, the last enzyme in the mitochondrial electron transport chain which drives oxidative phosphorylation. The respiratory chain contains 3 multisubunit complexes succinate dehydrogenase (complex II, CII), ubiquinol-cytochrome c oxidoreductase (cytochrome b-c1 complex, complex III, CIII) and cytochrome c oxidase (complex IV, CIV), that cooperate to transfer electrons derived from NADH and succinate to molecular oxygen, creating an electrochemical gradient over the inner membrane that drives transmembrane transport and the ATP synthase. Cytochrome c oxidase is the component of the respiratory chain that catalyzes the reduction of oxygen to water. Electrons originating from reduced cytochrome c in the intermembrane space (IMS) are transferred via the dinuclear copper A center (CU(A)) of subunit 2 and heme A of subunit 1 to the active site in subunit 1, a binuclear center (BNC) formed by heme A3 and copper B (CU(B)). The BNC reduces molecular oxygen to 2 water molecules using 4 electrons from cytochrome c in the IMS and 4 protons from the mitochondrial matrix. The sequence is that of Cytochrome c oxidase subunit 2 (mt:CoII) from Drosophila lowei (Fruit fly).